The sequence spans 1460 residues: Venom prothrombin activator pseutarin-C non-catalytic subunit (1460 aa).

The first 30 residues, 1-30 (MGRYSVSPVPKCLLLMFLGWSGLKYYQVNA), serve as a signal peptide directing secretion. The Plastocyanin-like 1 domain occupies 32-196 (QLREYHIAAQ…SGLIGALLIC (165 aa)). F5/8 type A domains are found at residues 32 to 330 (QLRE…LNIK) and 351 to 685 (KNWE…FLDA). The Ca(2+) site is built by lysine 124, glutamate 139, aspartate 142, and aspartate 143. Asparagine 156 carries N-linked (GlcNAc...) asparagine glycosylation. The cysteines at positions 170 and 196 are disulfide-linked. 2 N-linked (GlcNAc...) asparagine glycosylation sites follow: asparagine 204 and asparagine 242. 3 Plastocyanin-like domains span residues 206–330 (SQKF…LNIK), 351–529 (KNWE…LLVC), and 539–685 (VQNK…FLDA). Cysteine 251 and cysteine 332 are disulfide-bonded. Asparagine 406 and asparagine 471 each carry an N-linked (GlcNAc...) asparagine glycan. A disulfide bridge connects residues cysteine 503 and cysteine 529. Residue asparagine 557 is glycosylated (N-linked (GlcNAc...) asparagine). 4 disulfide bridges follow: cysteine 672–cysteine 1032, cysteine 966–cysteine 992, cysteine 1147–cysteine 1298, and cysteine 1303–cysteine 1457. Residues 693 to 818 (GNEEEEEDDG…PDDIAGRYLR (126 aa)) form a b region. A propeptide spans 773-818 (SFKGSVAEEELKHTALALEEDAHASDPRIDSNSARNPDDIAGRYLR) (activation peptide (connecting region)). 2 Plastocyanin-like domains span residues 824-992 (NKRR…ILIC) and 1001-1143 (NRTI…FTVI). Residues 824–1143 (NKRRYYIAAE…RGMQALFTVI (320 aa)) form the F5/8 type A 3 domain. Lysine 920, phenylalanine 935, aspartate 938, and aspartate 939 together coordinate Ca(2+). The N-linked (GlcNAc...) asparagine glycan is linked to asparagine 944. Asparagine 1001 and asparagine 1180 each carry an N-linked (GlcNAc...) asparagine glycan. F5/8 type C domains lie at 1147–1298 (CKLP…LLGC) and 1303–1457 (CSVP…LFGC).

The protein belongs to the multicopper oxidase family. In terms of assembly, heterodimer of a light and a heavy chains; non-disulfide-linked. The interaction between the two chains is calcium-dependent. Found in its active form associated with pseutarin-C catalytic subunit (AC Q56VR3). In physiological conditions, blood coagulation factor V and factor Va are inactivated by activated protein C (APC) through proteolytic degradation of the heavy chain. However, pseutarin-C non-catalytic subunit (factor V-like protein) retains its full activity even at high concentration of APC. This has two explanations: this protein has only one of the three cleavage sites present in factor V that are targeted by the APC for inactivation, and the binding with the catalytic subunit protect the cleavage site from inactivation. As to expression, expressed by the venom gland.

The protein localises to the secreted. Functionally, snake prothrombin activator that attacks the hemostatic system of prey. This non-catalytic subunit is functionally similar to blood coagulation factor V. It serves as a critical cofactor for the prothrombinase activity of the catalytic subunit, which is similar to the blood coagulation factor X. The complex converts prothrombin to thrombin by sequential cleavage at two positions, Arg-320 followed by Arg-271. Cleavage at Arg-320 produces an active intermediate known as meizothrombin. Meizothrombin is the 'second' substrate for prothrombinase, and it docks in an altered manner to present the second cleavage site (271). Cleavage at Arg-271 releases active thrombin from its pro-fragment. This order of events is reversed if the protease component of prothrombinase is used on its own, suggesting that the 271 site is inherently more accessible to proteolysis. The complex converts prothrombin to thrombin in presence but also in the absence of membrane. The chain is Venom prothrombin activator pseutarin-C non-catalytic subunit from Pseudonaja textilis (Eastern brown snake).